A 538-amino-acid polypeptide reads, in one-letter code: RNA-binding protein RO60 (538 aa).

The residue at position 1 (M1) is an N-acetylmethionine. 2 positions are modified to phosphoserine: S4 and S19. Positions 16 to 369 (IANSQDGYVW…TFKTVEPTGK (354 aa)) constitute a TROVE domain. Positions 120–284 (RIPTHLFTFI…EMPLTALLRN (165 aa)) are RNA-binding. Residues K224 and K359 each carry the N6-acetyllysine modification. The tract at residues 361-538 (FKTVEPTGKR…VIRNFTLDMI (178 aa)) is VWFA-like domain. Positions 378, 380, and 445 each coordinate a divalent metal cation.

The protein belongs to the Ro 60 kDa family. As to quaternary structure, identified in a IGF2BP1-dependent mRNP granule complex containing untranslated mRNAs. Found in a complex with PUF60 and Y5 RNA. Interacts with RAB11FIP5.

Its subcellular location is the cytoplasm. Functionally, RNA-binding protein that binds to misfolded non-coding RNAs, pre-5S rRNA, and several small cytoplasmic RNA molecules known as Y RNAs. Binds to endogenous Alu retroelements which are induced by type I interferon and stimulate porinflammatory cytokine secretion. Regulates the expression of Alu retroelements as well as inflammatory genes. May play roles in cilia formation and/or maintenance. The polypeptide is RNA-binding protein RO60 (Homo sapiens (Human)).